A 516-amino-acid polypeptide reads, in one-letter code: L-amino acid oxidase (516 aa).

The first 18 residues, 1-18, serve as a signal peptide directing secretion; the sequence is MNVFFMFSLLFLAALESC. Residues 61 to 62, 81 to 82, Arg89, and 105 to 108 each bind FAD; these read MS, EA, and GPMR. A substrate-binding site is contributed by Arg108. An N-linked (GlcNAc...) asparagine glycan is attached at Asn190. Val279 contributes to the FAD binding site. Asn299 and Asn404 each carry an N-linked (GlcNAc...) asparagine glycan. The cysteines at positions 349 and 430 are disulfide-linked. FAD-binding positions include Glu475 and 482–487; that span reads GWIDST. 482-483 is a substrate binding site; it reads GW.

This sequence belongs to the flavin monoamine oxidase family. FIG1 subfamily. In terms of assembly, homodimer; non-covalently linked. Requires FAD as cofactor. In terms of processing, N-glycosylated (14%). The enzymatic activity remains unchanged after deglycosylation. Expressed by the venom gland.

Its subcellular location is the secreted. It carries out the reaction an L-alpha-amino acid + O2 + H2O = a 2-oxocarboxylate + H2O2 + NH4(+). The catalysed reaction is L-leucine + O2 + H2O = 4-methyl-2-oxopentanoate + H2O2 + NH4(+). It catalyses the reaction L-phenylalanine + O2 + H2O = 3-phenylpyruvate + H2O2 + NH4(+). The enzyme catalyses L-tryptophan + O2 + H2O = indole-3-pyruvate + H2O2 + NH4(+). It carries out the reaction L-methionine + O2 + H2O = 4-methylsulfanyl-2-oxobutanoate + H2O2 + NH4(+). The catalysed reaction is L-isoleucine + O2 + H2O = (S)-3-methyl-2-oxopentanoate + H2O2 + NH4(+). Inhibited by the substrate analog N-acetyl tryptophan. In terms of biological role, catalyzes an oxidative deamination of predominantly hydrophobic and aromatic L-amino acids, thus producing hydrogen peroxide that may contribute to the diverse toxic effects of this enzyme. Is highly active on L-Met&gt;L-Leu&gt;L-Phe&gt;L-Trp=L-Ile. Binds to the cell surface and enables the production of highly localized concentration of hydrogen peroxide in or near the binding interfaces. Does not bind to phospholipids. Induces platelet-rich plasma aggregation, shows cytotoxic effects on some cancer cell lines (B16-F10 (mouse melanoma), PC12 (rat pheochromocytoma), MCF-7 and MDA-MB-231 (human breast carcinoma)) and shows antibacterial activities against both Gram-positive and Gram-negative bacteria. Also exhibits hemorrhage and edema. Does not show cytotoxicity on erythrocytes and peripheral blood mononuclear cells. Its effect on platelets is controversial, since it either induces aggregation or inhibits agonist-induced aggregation. These different effects are probably due to different experimental conditions. The chain is L-amino acid oxidase from Cerastes cerastes (Horned desert viper).